Consider the following 338-residue polypeptide: Solute carrier family 35 member G3 (338 aa).

The tract at residues 1-24 is disordered; it reads MAGSHPYFNQPDSTHPSPPSAPPS. 9 helical membrane-spanning segments follow: residues 37 to 57, 67 to 87, 105 to 125, 160 to 180, 190 to 210, 221 to 241, 250 to 270, 281 to 301, and 305 to 325; these read TSGLLVALLGGGLPAGFVGPL, LPSLELLIWRCLFHLPIALLL, FFCALLNILSIGCAYSAVQVV, CGLLGCILGLIIIVGPGLWTL, ALGYAEAFLGGRALSLGLLVY, TVAFLSGLVGLLGSVPGLFVL, LLSWSCVGAVGILALVSFTCV, LVCAVLHSEVVVALILQYYML, and VAPSDIMGAGVALGSIAIITA. Positions 49–174 constitute an EamA 1 domain; it reads LPAGFVGPLS…CILGLIIIVG (126 aa). Residues 272 to 325 enclose the EamA 2 domain; it reads YAVTKAHPALVCAVLHSEVVVALILQYYMLHETVAPSDIMGAGVALGSIAIITA.

It belongs to the SLC35G solute transporter family.

The protein resides in the membrane. The sequence is that of Solute carrier family 35 member G3 (SLC35G3) from Pan paniscus (Pygmy chimpanzee).